We begin with the raw amino-acid sequence, 209 residues long: Urease accessory protein UreG (209 aa).

18 to 25 (GPVGSGKT) is a GTP binding site.

The protein belongs to the SIMIBI class G3E GTPase family. UreG subfamily. As to quaternary structure, homodimer. UreD, UreF and UreG form a complex that acts as a GTP-hydrolysis-dependent molecular chaperone, activating the urease apoprotein by helping to assemble the nickel containing metallocenter of UreC. The UreE protein probably delivers the nickel.

Its subcellular location is the cytoplasm. Its function is as follows. Facilitates the functional incorporation of the urease nickel metallocenter. This process requires GTP hydrolysis, probably effectuated by UreG. In Cupriavidus pinatubonensis (strain JMP 134 / LMG 1197) (Cupriavidus necator (strain JMP 134)), this protein is Urease accessory protein UreG.